The primary structure comprises 185 residues: Elongation factor P 1 (185 aa).

It belongs to the elongation factor P family.

The protein localises to the cytoplasm. It participates in protein biosynthesis; polypeptide chain elongation. Functionally, involved in peptide bond synthesis. Stimulates efficient translation and peptide-bond synthesis on native or reconstituted 70S ribosomes in vitro. Probably functions indirectly by altering the affinity of the ribosome for aminoacyl-tRNA, thus increasing their reactivity as acceptors for peptidyl transferase. This chain is Elongation factor P 1 (efp1), found in Chlamydia pneumoniae (Chlamydophila pneumoniae).